Here is a 422-residue protein sequence, read N- to C-terminus: Sphingomyelin phosphodiesterase 2 (422 aa).

Residue Glu-49 participates in Mg(2+) binding. Catalysis depends on His-272, which acts as the Proton acceptor. The next 2 helical transmembrane spans lie at 325 to 345 (ALFG…CVLA) and 354 to 374 (AIML…VYLF). The interval 397–422 (TETQDLGSEPHPTHCRQQEADRAEEK) is disordered. Basic and acidic residues predominate over residues 412–422 (RQQEADRAEEK).

This sequence belongs to the neutral sphingomyelinase family. It depends on Mg(2+) as a cofactor.

It is found in the membrane. The catalysed reaction is a sphingomyelin + H2O = phosphocholine + an N-acylsphing-4-enine + H(+). It catalyses the reaction 1-O-octadecyl-sn-glycero-3-phosphocholine + H2O = 1-O-octadecyl-sn-glycerol + phosphocholine + H(+). The enzyme catalyses an N-(acyl)-sphingosylphosphocholine + H2O = an N-acyl-sphingoid base + phosphocholine + H(+). It carries out the reaction 1-hexadecanoyl-sn-glycero-3-phosphocholine + H2O = 1-hexadecanoyl-sn-glycerol + phosphocholine + H(+). The catalysed reaction is a sphingosylphosphocholine + H2O = a sphingoid base + phosphocholine + H(+). It catalyses the reaction 1-O-hexadecyl-sn-glycero-3-phosphocholine + H2O = 1-O-hexadecyl-sn-glycerol + phosphocholine + H(+). Its pathway is lipid metabolism; sphingolipid metabolism. Its function is as follows. Catalyzes the hydrolysis of sphingomyelin to form ceramide and phosphocholine. Ceramide mediates numerous cellular functions, such as apoptosis and growth arrest, and is capable of regulating these 2 cellular events independently. Also hydrolyzes sphingosylphosphocholine. Hydrolyze 1-acyl-2-lyso-sn-glycero-3-phosphocholine (lyso-PC) and 1-O-alkyl-2-lyso-sn-glycero-3-phosphocholine (lyso-platelet-activating factor). The chain is Sphingomyelin phosphodiesterase 2 (Smpd2) from Rattus norvegicus (Rat).